A 104-amino-acid polypeptide reads, in one-letter code: Chemokine-like protein MC148 (104 aa).

Interacts with host CXCL12.

Functionally, plays a role in antagonizing the chemotaxis of multiple leukocyte subsets induced by CC and CXC chemokines. Displaces the interaction between CXCL12 and CXCR4 and thereby inactivates the antiviral activity of host CXCL12. This Homo sapiens (Human) protein is Chemokine-like protein MC148 (MC148).